Consider the following 257-residue polypeptide: MAHSQVGIQLISESTEKTLAELTALCAEYNIIHNEKSPLALVQTDERLELRKLDEPKLRAVYVDFIGGTMAHRRKFGGGRGEAVAKAVGIKGSALPTVIDATAGLGRDAFVLAAIGCQVRLVERHPVVFLLLQDGLNRAYQDEEIGEILQQNLRLLNVHHINELDPNSDYADVVYLDPMYPHKQKSALVKKEMRVFQHLVGADLDADELLLPALQLAKKRVVVKRPDYAEFLCGKQPHFSRETKNHRFDIYMGASQC.

S-adenosyl-L-methionine is bound by residues 107–108, 123–124, and Asp-177; these read RD and ER.

Belongs to the methyltransferase superfamily. RsmJ family.

It localises to the cytoplasm. The catalysed reaction is guanosine(1516) in 16S rRNA + S-adenosyl-L-methionine = N(2)-methylguanosine(1516) in 16S rRNA + S-adenosyl-L-homocysteine + H(+). In terms of biological role, specifically methylates the guanosine in position 1516 of 16S rRNA. In Haemophilus influenzae (strain PittGG), this protein is Ribosomal RNA small subunit methyltransferase J.